The following is a 483-amino-acid chain: Glutamyl-tRNA(Gln) amidotransferase subunit A (483 aa).

Residues Lys-75 and Ser-150 each act as charge relay system in the active site. Ser-174 acts as the Acyl-ester intermediate in catalysis.

The protein belongs to the amidase family. GatA subfamily. As to quaternary structure, heterotrimer of A, B and C subunits.

The catalysed reaction is L-glutamyl-tRNA(Gln) + L-glutamine + ATP + H2O = L-glutaminyl-tRNA(Gln) + L-glutamate + ADP + phosphate + H(+). Its function is as follows. Allows the formation of correctly charged Gln-tRNA(Gln) through the transamidation of misacylated Glu-tRNA(Gln) in organisms which lack glutaminyl-tRNA synthetase. The reaction takes place in the presence of glutamine and ATP through an activated gamma-phospho-Glu-tRNA(Gln). The sequence is that of Glutamyl-tRNA(Gln) amidotransferase subunit A from Legionella pneumophila (strain Paris).